A 129-amino-acid polypeptide reads, in one-letter code: Large ribosomal subunit protein uL22 (129 aa).

It belongs to the universal ribosomal protein uL22 family. As to quaternary structure, part of the 50S ribosomal subunit.

This protein binds specifically to 23S rRNA; its binding is stimulated by other ribosomal proteins, e.g. L4, L17, and L20. It is important during the early stages of 50S assembly. It makes multiple contacts with different domains of the 23S rRNA in the assembled 50S subunit and ribosome. Functionally, the globular domain of the protein is located near the polypeptide exit tunnel on the outside of the subunit, while an extended beta-hairpin is found that lines the wall of the exit tunnel in the center of the 70S ribosome. This chain is Large ribosomal subunit protein uL22, found in Metamycoplasma hominis (strain ATCC 23114 / DSM 25592 / NBRC 14850 / NCTC 10111 / PG21) (Mycoplasma hominis).